A 160-amino-acid polypeptide reads, in one-letter code: MGVTKKPDLNDPVLRAKLAKGMGHNYYGEPAWPNDLLYIFPVVILGTIACNVGLAVLEPSMIGEPPDPFATPLEILPEWYFFPVFQILRTVPNKLLGVLLMVSVPAGLLTVPFLENVNKFQNPFRRPVATTVFLIGTAVALWLGIGATLPIDKSLTLGLF.

3 helical membrane passes run 36–56 (LLYI…GLAV), 95–115 (LLGV…PFLE), and 131–151 (TVFL…TLPI).

This sequence belongs to the cytochrome b family. PetD subfamily. The 4 large subunits of the cytochrome b6-f complex are cytochrome b6, subunit IV (17 kDa polypeptide, petD), cytochrome f and the Rieske protein, while the 4 small subunits are petG, petL, petM and petN. The complex functions as a dimer.

The protein resides in the plastid. Its subcellular location is the chloroplast thylakoid membrane. Its function is as follows. Component of the cytochrome b6-f complex, which mediates electron transfer between photosystem II (PSII) and photosystem I (PSI), cyclic electron flow around PSI, and state transitions. The chain is Cytochrome b6-f complex subunit 4 from Solanum tuberosum (Potato).